A 96-amino-acid chain; its full sequence is Large ribosomal subunit protein bL27 (96 aa).

Residues 1 to 9 constitute a propeptide that is removed on maturation; it reads MLRLDLQFF. The disordered stretch occupies residues 1-36; it reads MLRLDLQFFSTKKGQGSSKNGRDSESKRLGSKRADG. Over residues 8-19 the composition is skewed to polar residues; that stretch reads FFSTKKGQGSSK. The span at 20-35 shows a compositional bias: basic and acidic residues; that stretch reads NGRDSESKRLGSKRAD.

The protein belongs to the bacterial ribosomal protein bL27 family. Post-translationally, the N-terminus is cleaved by ribosomal processing cysteine protease Prp.

This chain is Large ribosomal subunit protein bL27, found in Oceanobacillus iheyensis (strain DSM 14371 / CIP 107618 / JCM 11309 / KCTC 3954 / HTE831).